Here is a 166-residue protein sequence, read N- to C-terminus: Biotin carboxyl carrier protein of acetyl-CoA carboxylase (166 aa).

Polar residues predominate over residues 61-70 (STASEASSPA). The interval 61–82 (STASEASSPASVKDVPVEEQPQ) is disordered. Residues 90 to 166 (GDIVESPLVG…EFGQGLVRIK (77 aa)) form the Biotinyl-binding domain. K132 carries the N6-biotinyllysine modification.

As to quaternary structure, homodimer.

The protein operates within lipid metabolism; fatty acid biosynthesis. In terms of biological role, this protein is a component of the acetyl coenzyme A carboxylase complex; first, biotin carboxylase catalyzes the carboxylation of the carrier protein and then the transcarboxylase transfers the carboxyl group to form malonyl-CoA. The polypeptide is Biotin carboxyl carrier protein of acetyl-CoA carboxylase (Streptococcus pyogenes serotype M6 (strain ATCC BAA-946 / MGAS10394)).